The following is a 248-amino-acid chain: Probable transcriptional regulatory protein M446_6579 (248 aa).

Belongs to the TACO1 family.

It is found in the cytoplasm. The polypeptide is Probable transcriptional regulatory protein M446_6579 (Methylobacterium sp. (strain 4-46)).